We begin with the raw amino-acid sequence, 113 residues long: Small ribosomal subunit protein bS6 (113 aa).

The protein belongs to the bacterial ribosomal protein bS6 family.

Its function is as follows. Binds together with bS18 to 16S ribosomal RNA. The chain is Small ribosomal subunit protein bS6 from Flavobacterium johnsoniae (strain ATCC 17061 / DSM 2064 / JCM 8514 / BCRC 14874 / CCUG 350202 / NBRC 14942 / NCIMB 11054 / UW101) (Cytophaga johnsonae).